Reading from the N-terminus, the 163-residue chain is NADH-quinone oxidoreductase subunit I (163 aa).

4Fe-4S ferredoxin-type domains follow at residues 54–84 and 94–123; these read LRRY…IDSA and TRYD…ETHI. Residues cysteine 64, cysteine 67, cysteine 70, cysteine 74, cysteine 103, cysteine 106, cysteine 109, and cysteine 113 each contribute to the [4Fe-4S] cluster site.

This sequence belongs to the complex I 23 kDa subunit family. NDH-1 is composed of 14 different subunits. Subunits NuoA, H, J, K, L, M, N constitute the membrane sector of the complex. [4Fe-4S] cluster serves as cofactor.

It is found in the cell inner membrane. The catalysed reaction is a quinone + NADH + 5 H(+)(in) = a quinol + NAD(+) + 4 H(+)(out). In terms of biological role, NDH-1 shuttles electrons from NADH, via FMN and iron-sulfur (Fe-S) centers, to quinones in the respiratory chain. The immediate electron acceptor for the enzyme in this species is believed to be ubiquinone. Couples the redox reaction to proton translocation (for every two electrons transferred, four hydrogen ions are translocated across the cytoplasmic membrane), and thus conserves the redox energy in a proton gradient. The chain is NADH-quinone oxidoreductase subunit I from Xylella fastidiosa (strain 9a5c).